The sequence spans 290 residues: Arylamine N-acetyltransferase 2 (290 aa).

Catalysis depends on Cys-68, which acts as the Acyl-thioester intermediate. Positions 103 and 104 each coordinate CoA. 106 to 107 (IH) contacts substrate. Residues His-107 and Asp-122 contribute to the active site. Tyr-208 contacts CoA.

It belongs to the arylamine N-acetyltransferase family.

It is found in the cytoplasm. The enzyme catalyses an arylamine + acetyl-CoA = an N-acetylarylamine + CoA. The catalysed reaction is an N-hydroxyarylamine + acetyl-CoA = an N-acetoxyarylamine + CoA. In terms of biological role, catalyzes the N- or O-acetylation of various arylamine and heterocyclic amine substrates. Participates in the detoxification of a plethora of hydrazine and arylamine drugs. In Rattus norvegicus (Rat), this protein is Arylamine N-acetyltransferase 2 (Nat2).